We begin with the raw amino-acid sequence, 758 residues long: Polyribonucleotide nucleotidyltransferase (758 aa).

Residues Asp-488 and Asp-494 each coordinate Mg(2+). Positions 555–614 (PKLYTMKINPEKIRDVIGKGGAVIRALTEETGTQINIDEDGTITIASTDSAKADEAKRRI) constitute a KH domain. The S1 motif domain maps to 624–692 (GKIYEGPVVK…EKGRVKLSMR (69 aa)). Residues 692-758 (RALLDRPMGD…AGEHSGQMDA (67 aa)) form a disordered region. Residues 707-735 (PAERGERGDRGDRGDRPERGERRERREPA) are compositionally biased toward basic and acidic residues. Low complexity predominate over residues 736–745 (GADQQQQQQQ).

Belongs to the polyribonucleotide nucleotidyltransferase family. It depends on Mg(2+) as a cofactor.

Its subcellular location is the cytoplasm. It catalyses the reaction RNA(n+1) + phosphate = RNA(n) + a ribonucleoside 5'-diphosphate. Functionally, involved in mRNA degradation. Catalyzes the phosphorolysis of single-stranded polyribonucleotides processively in the 3'- to 5'-direction. This Paracidovorax citrulli (strain AAC00-1) (Acidovorax citrulli) protein is Polyribonucleotide nucleotidyltransferase.